Consider the following 459-residue polypeptide: Ribulose bisphosphate carboxylase (459 aa).

A substrate-binding site is contributed by Asn-111. The active-site Proton acceptor is the Lys-166. Residue Lys-168 coordinates substrate. 3 residues coordinate Mg(2+): Lys-191, Asp-193, and Glu-194. At Lys-191 the chain carries N6-carboxylysine. Residue His-287 is the Proton acceptor of the active site. Substrate-binding residues include Arg-288, His-321, and Ser-368.

It belongs to the RuBisCO large chain family. Type II subfamily. As to quaternary structure, homodimer. It depends on Mg(2+) as a cofactor.

The enzyme catalyses 2 (2R)-3-phosphoglycerate + 2 H(+) = D-ribulose 1,5-bisphosphate + CO2 + H2O. It catalyses the reaction D-ribulose 1,5-bisphosphate + O2 = 2-phosphoglycolate + (2R)-3-phosphoglycerate + 2 H(+). RuBisCO catalyzes two reactions: the carboxylation of D-ribulose 1,5-bisphosphate, the primary event in carbon dioxide fixation, as well as the oxidative fragmentation of the pentose substrate. Both reactions occur simultaneously and in competition at the same active site. This Cereibacter sphaeroides (strain ATCC 17029 / ATH 2.4.9) (Rhodobacter sphaeroides) protein is Ribulose bisphosphate carboxylase.